Reading from the N-terminus, the 128-residue chain is Probable 4-amino-4-deoxy-L-arabinose-phosphoundecaprenol flippase subunit ArnF (128 aa).

At 1–2 the chain is on the cytoplasmic side; sequence MG. A helical transmembrane segment spans residues 3-23; the sequence is LMWGLFSVIIASVAQLSLGFA. Residues 24–35 lie on the Periplasmic side of the membrane; that stretch reads ASHLPPMTHLWD. A helical membrane pass occupies residues 36–56; sequence FIAALLAFGLDARILLLGLLG. Over 57–76 the chain is Cytoplasmic; sequence YLLSVFCWYKTLHKLALSKA. The chain crosses the membrane as a helical span at residues 77-97; it reads YALLSMSYVLVWIASMVLPGW. The Periplasmic portion of the chain corresponds to 98–100; sequence EGT. Residues 101-121 form a helical membrane-spanning segment; the sequence is FSLKALLGVACIMSGLMLIFL. At 122–128 the chain is on the cytoplasmic side; the sequence is PMTKQRY.

The protein belongs to the ArnF family. In terms of assembly, heterodimer of ArnE and ArnF.

Its subcellular location is the cell inner membrane. Its pathway is bacterial outer membrane biogenesis; lipopolysaccharide biosynthesis. Functionally, translocates 4-amino-4-deoxy-L-arabinose-phosphoundecaprenol (alpha-L-Ara4N-phosphoundecaprenol) from the cytoplasmic to the periplasmic side of the inner membrane. The sequence is that of Probable 4-amino-4-deoxy-L-arabinose-phosphoundecaprenol flippase subunit ArnF from Escherichia coli (strain 55989 / EAEC).